The following is a 269-amino-acid chain: Phosphate import ATP-binding protein PstB (269 aa).

An ABC transporter domain is found at 14 to 253; it reads LTLEDVSISY…EFDSTKKIFS (240 aa). 46 to 53 lines the ATP pocket; the sequence is GPSGCGKS.

Belongs to the ABC transporter superfamily. Phosphate importer (TC 3.A.1.7) family. As to quaternary structure, the complex is composed of two ATP-binding proteins (PstB), two transmembrane proteins (PstC and PstA) and a solute-binding protein (PstS).

Its subcellular location is the cell inner membrane. It carries out the reaction phosphate(out) + ATP + H2O = ADP + 2 phosphate(in) + H(+). In terms of biological role, part of the ABC transporter complex PstSACB involved in phosphate import. Responsible for energy coupling to the transport system. The polypeptide is Phosphate import ATP-binding protein PstB (Prochlorococcus marinus subsp. pastoris (strain CCMP1986 / NIES-2087 / MED4)).